The sequence spans 84 residues: Small ribosomal subunit protein eS27 (84 aa).

Positions 1 to 16 (MPLAKDLLHPSPEEEK) are enriched in basic and acidic residues. The disordered stretch occupies residues 1–23 (MPLAKDLLHPSPEEEKRKHKKKR). Residue Ser-11 is modified to Phosphoserine. A C4-type zinc finger spans residues 38–60 (PGCYKITTVFSHAQTVVLCVGCS).

Belongs to the eukaryotic ribosomal protein eS27 family. Component of the small ribosomal subunit. Part of the small subunit (SSU) processome, composed of more than 70 proteins and the RNA chaperone small nucleolar RNA (snoRNA) U3. The cofactor is Zn(2+).

The protein localises to the cytoplasm. The protein resides in the nucleus. It localises to the nucleolus. Functionally, component of the small ribosomal subunit. The ribosome is a large ribonucleoprotein complex responsible for the synthesis of proteins in the cell. Required for proper rRNA processing and maturation of 18S rRNAs. Part of the small subunit (SSU) processome, first precursor of the small eukaryotic ribosomal subunit. During the assembly of the SSU processome in the nucleolus, many ribosome biogenesis factors, an RNA chaperone and ribosomal proteins associate with the nascent pre-rRNA and work in concert to generate RNA folding, modifications, rearrangements and cleavage as well as targeted degradation of pre-ribosomal RNA by the RNA exosome. The polypeptide is Small ribosomal subunit protein eS27 (Mus musculus (Mouse)).